The sequence spans 253 residues: Diphthine synthase (253 aa).

Residues Asp83, Leu86, 111 to 112 (SI), Leu163, and Leu205 each bind S-adenosyl-L-methionine.

The protein belongs to the diphthine synthase family. Homodimer.

It catalyses the reaction 2-[(3S)-amino-3-carboxypropyl]-L-histidyl-[translation elongation factor 2] + 3 S-adenosyl-L-methionine = diphthine-[translation elongation factor 2] + 3 S-adenosyl-L-homocysteine + 3 H(+). It functions in the pathway protein modification; peptidyl-diphthamide biosynthesis. Its function is as follows. S-adenosyl-L-methionine-dependent methyltransferase that catalyzes the trimethylation of the amino group of the modified target histidine residue in translation elongation factor 2 (EF-2), to form an intermediate called diphthine. The three successive methylation reactions represent the second step of diphthamide biosynthesis. The sequence is that of Diphthine synthase from Pyrobaculum neutrophilum (strain DSM 2338 / JCM 9278 / NBRC 100436 / V24Sta) (Thermoproteus neutrophilus).